Here is a 460-residue protein sequence, read N- to C-terminus: 2-methylcitrate synthase, mitochondrial (460 aa).

The transit peptide at M1–A24 directs the protein to the mitochondrion. CoA is bound by residues R69 and K187. H264 lines the oxaloacetate pocket. Residue L299 coordinates CoA. H300 is a catalytic residue. CoA is bound by residues V341, G343, and Y344. Oxaloacetate is bound by residues H346 and R355. Residue H346 is part of the active site. CoA is bound by residues T395, K396, and N401. Residue D403 is part of the active site. Oxaloacetate is bound by residues R429 and R449.

This sequence belongs to the citrate synthase family. In terms of assembly, homodimer.

The protein localises to the mitochondrion matrix. It catalyses the reaction propanoyl-CoA + oxaloacetate + H2O = (2S,3S)-2-methylcitrate + CoA + H(+). The catalysed reaction is oxaloacetate + acetyl-CoA + H2O = citrate + CoA + H(+). It functions in the pathway organic acid metabolism; propanoate degradation. Its activity is regulated as follows. Partially inhibited by ATP. In terms of biological role, catalyzes the synthesis of (2S,3S)-2-methylcitrate from propionyl-CoA and oxaloacetate and also from acetyl-CoA and oxaloacetate with a greater efficiency. Also has citrate synthase activity and can substitute for the loss of citA activity. The protein is 2-methylcitrate synthase, mitochondrial of Emericella nidulans (strain FGSC A4 / ATCC 38163 / CBS 112.46 / NRRL 194 / M139) (Aspergillus nidulans).